The primary structure comprises 825 residues: Taste receptor cell protein 1 (825 aa).

The signal sequence occupies residues 1-21 (MDKQWFPAAGILLAALLVVSA). 2 disordered regions span residues 66-97 (EREP…GPSG) and 299-322 (TSPS…SASP). Low complexity predominate over residues 302–322 (SQASSLHSPRPSSASPLSASP).

As to expression, expression is restricted to circumvallate papillae.

This Mus musculus (Mouse) protein is Taste receptor cell protein 1 (Trcg1).